Here is a 433-residue protein sequence, read N- to C-terminus: Histidinol dehydrogenase 2 (433 aa).

NAD(+) contacts are provided by Tyr-130, Gln-192, and Asn-215. The substrate site is built by Ser-238, Gln-260, and His-263. Gln-260 and His-263 together coordinate Zn(2+). Catalysis depends on proton acceptor residues Glu-328 and His-329. Positions 329, 362, 416, and 421 each coordinate substrate. Position 362 (Asp-362) interacts with Zn(2+). His-421 contacts Zn(2+).

This sequence belongs to the histidinol dehydrogenase family. Requires Zn(2+) as cofactor.

The catalysed reaction is L-histidinol + 2 NAD(+) + H2O = L-histidine + 2 NADH + 3 H(+). Its pathway is amino-acid biosynthesis; L-histidine biosynthesis; L-histidine from 5-phospho-alpha-D-ribose 1-diphosphate: step 9/9. In terms of biological role, catalyzes the sequential NAD-dependent oxidations of L-histidinol to L-histidinaldehyde and then to L-histidine. The polypeptide is Histidinol dehydrogenase 2 (hisD2) (Nostoc sp. (strain PCC 7120 / SAG 25.82 / UTEX 2576)).